The sequence spans 123 residues: Small ribosomal subunit protein uS12cz/uS12cy (123 aa).

This sequence belongs to the universal ribosomal protein uS12 family. Part of the 30S ribosomal subunit.

The protein resides in the plastid. It is found in the chloroplast. In terms of biological role, with S4 and S5 plays an important role in translational accuracy. Located at the interface of the 30S and 50S subunits. The chain is Small ribosomal subunit protein uS12cz/uS12cy (rps12-A) from Angiopteris evecta (Mule's foot fern).